Consider the following 145-residue polypeptide: S-adenosylmethionine synthase 2 (145 aa).

Residues 6 to 7, Ala-23, Lys-27, and Lys-31 contribute to the ATP site; that span reads RK. Lys-31 contacts L-methionine.

It belongs to the AdoMet synthase family. In terms of assembly, homotetramer. It depends on Mn(2+) as a cofactor. The cofactor is Mg(2+). Co(2+) serves as cofactor. K(+) is required as a cofactor. As to expression, mainly in floral buds and roots.

It is found in the cytoplasm. It carries out the reaction L-methionine + ATP + H2O = S-adenosyl-L-methionine + phosphate + diphosphate. It participates in amino-acid biosynthesis; S-adenosyl-L-methionine biosynthesis; S-adenosyl-L-methionine from L-methionine: step 1/1. Functionally, catalyzes the formation of S-adenosylmethionine from methionine and ATP. The reaction comprises two steps that are both catalyzed by the same enzyme: formation of S-adenosylmethionine (AdoMet) and triphosphate, and subsequent hydrolysis of the triphosphate. The sequence is that of S-adenosylmethionine synthase 2 (SMS-2) from Petroselinum crispum (Parsley).